A 361-amino-acid chain; its full sequence is Mitochondrial import receptor subunit TOM40 homolog (361 aa).

Low complexity predominate over residues M1–P10. The interval M1 to D71 is disordered. The span at P11–T36 shows a compositional bias: pro residues. 2 stretches are compositionally biased toward low complexity: residues L37–R52 and G59–D71.

It belongs to the Tom40 family. As to quaternary structure, forms part of the preprotein translocase complex of the outer mitochondrial membrane (TOM complex) which consists of at least 7 different proteins (TOMM5, TOMM6, TOMM7, TOMM20, TOMM22, TOMM40 and TOMM70). Interacts with mitochondrial targeting sequences. Interacts with TIMM29; linking the TIM22 complex to the TOM complex. Forms a complex with BCAP31 (via C-terminus) which mediates the translocation of components of the mitochondrial membrane respiratory chain NADH dehydrogenase (Complex I) from the cytosol to the mitochondria. Interacts (via N-terminus) with CYP1A1 (via mitochondrial targeting signal); this interaction is required for CYP1A1 translocation across the mitochondrial outer membrane.

Its subcellular location is the mitochondrion outer membrane. Functionally, channel-forming protein essential for import of protein precursors into mitochondria. Plays a role in the assembly of the mitochondrial membrane respiratory chain NADH dehydrogenase (Complex I) by forming a complex with BCAP31 and mediating the translocation of Complex I components from the cytosol to the mitochondria. This chain is Mitochondrial import receptor subunit TOM40 homolog (TOMM40), found in Homo sapiens (Human).